The following is a 264-amino-acid chain: Glutamate racemase (264 aa).

Substrate is bound by residues 11–12 (DS) and 43–44 (YG). C74 functions as the Proton donor/acceptor in the catalytic mechanism. 75–76 (NT) contributes to the substrate binding site. Residue C193 is the Proton donor/acceptor of the active site. 194–195 (TH) contributes to the substrate binding site.

This sequence belongs to the aspartate/glutamate racemases family.

It carries out the reaction L-glutamate = D-glutamate. Its pathway is cell wall biogenesis; peptidoglycan biosynthesis. In terms of biological role, provides the (R)-glutamate required for cell wall biosynthesis. The protein is Glutamate racemase of Bifidobacterium longum subsp. infantis (strain ATCC 15697 / DSM 20088 / JCM 1222 / NCTC 11817 / S12).